The chain runs to 137 residues: Large ribosomal subunit protein uL16 (137 aa).

The protein belongs to the universal ribosomal protein uL16 family. As to quaternary structure, part of the 50S ribosomal subunit.

Its function is as follows. Binds 23S rRNA and is also seen to make contacts with the A and possibly P site tRNAs. In Paracoccus denitrificans (strain Pd 1222), this protein is Large ribosomal subunit protein uL16.